A 55-amino-acid polypeptide reads, in one-letter code: Ribulose bisphosphate carboxylase large chain (55 aa).

Residue H18 is the Proton acceptor of the active site. Substrate is bound by residues R19 and H27.

It belongs to the RuBisCO large chain family. Type I subfamily. As to quaternary structure, heterohexadecamer of 8 large chains and 8 small chains; disulfide-linked. The disulfide link is formed within the large subunit homodimers. Requires Mg(2+) as cofactor. In terms of processing, the disulfide bond which can form in the large chain dimeric partners within the hexadecamer appears to be associated with oxidative stress and protein turnover.

Its subcellular location is the plastid. The protein resides in the chloroplast. The enzyme catalyses 2 (2R)-3-phosphoglycerate + 2 H(+) = D-ribulose 1,5-bisphosphate + CO2 + H2O. It carries out the reaction D-ribulose 1,5-bisphosphate + O2 = 2-phosphoglycolate + (2R)-3-phosphoglycerate + 2 H(+). RuBisCO catalyzes two reactions: the carboxylation of D-ribulose 1,5-bisphosphate, the primary event in carbon dioxide fixation, as well as the oxidative fragmentation of the pentose substrate in the photorespiration process. Both reactions occur simultaneously and in competition at the same active site. This is Ribulose bisphosphate carboxylase large chain from Vitis sp. (Grape).